A 60-amino-acid chain; its full sequence is MVKEKYTRFERARIVGARALQIAMGAPVLVDDDGRLDPLGVAIAELKAEIIPITVKRKKS.

It belongs to the archaeal Rpo6/eukaryotic RPB6 RNA polymerase subunit family. In terms of assembly, part of the RNA polymerase complex.

The protein resides in the cytoplasm. The enzyme catalyses RNA(n) + a ribonucleoside 5'-triphosphate = RNA(n+1) + diphosphate. DNA-dependent RNA polymerase (RNAP) catalyzes the transcription of DNA into RNA using the four ribonucleoside triphosphates as substrates. The chain is DNA-directed RNA polymerase subunit Rpo6 from Methanosarcina acetivorans (strain ATCC 35395 / DSM 2834 / JCM 12185 / C2A).